Reading from the N-terminus, the 296-residue chain is Magnetosome protein MamB (296 aa).

The Cytoplasmic segment spans residues 1–12 (MKFENCRDCREE). A transmembrane domain (TMD) region spans residues 1–214 (MKFENCRDCR…GLMDSSVDTE (214 aa)). Residues 13–33 (VVWWAFTADICMTLFKGVLGL) traverse the membrane as a helical segment. The Lumenal segment spans residues 34–83 (MSGSVALVADSLHSGADVVASGVTQLSLKISNKPADERYPFGYGNIQYIS). The chain crosses the membrane as a helical span at residues 84 to 104 (SSIVGSLLLIGASFLMYGSVM). The Cytoplasmic portion of the chain corresponds to 105–112 (KLISGTYE). The helical transmembrane segment at 113-133 (APSIFAAVGASVTVIVNELMY) threads the bilayer. Residues 134–164 (RYQICVGNENNSPAIIANAWDNRSDAISSAA) are Lumenal-facing. The chain crosses the membrane as a helical span at residues 165–185 (VMVGVIASVIGFPIADTIAAI). Topologically, residues 186–296 (GVSALVGRIG…SPAPAAAARA (111 aa)) are cytoplasmic. Positions 215 to 296 (LLQTAWQVAM…SPAPAAAARA (82 aa)) are C-terminal domain (CTD).

Belongs to the cation diffusion facilitator (CDF) transporter (TC 2.A.4) family. Forms heterodimers with MamM. Probably interacts with MamE.

The protein resides in the magnetosome membrane. Plays a dual, essential role in magnetosome formation; required for magnetosome vesicle formation as well as biomineralization. Probably binds and transports iron. Requires heterodimerization with MamM for stability. The polypeptide is Magnetosome protein MamB (mamB) (Paramagnetospirillum magneticum (strain ATCC 700264 / AMB-1) (Magnetospirillum magneticum)).